A 142-amino-acid chain; its full sequence is Small heat shock protein IbpB (142 aa).

The sHSP domain occupies 25-136 (GQEPQGFPPY…QPQRIAIGTT (112 aa)).

This sequence belongs to the small heat shock protein (HSP20) family. In terms of assembly, homodimer. Forms homomultimers of about 100-150 subunits at optimal growth temperatures. Conformation changes to oligomers at high temperatures or high ionic concentrations. The decrease in size of the multimers is accompanied by an increase in chaperone activity.

It localises to the cytoplasm. Associates with aggregated proteins, together with IbpA, to stabilize and protect them from irreversible denaturation and extensive proteolysis during heat shock and oxidative stress. Aggregated proteins bound to the IbpAB complex are more efficiently refolded and reactivated by the ATP-dependent chaperone systems ClpB and DnaK/DnaJ/GrpE. Its activity is ATP-independent. The protein is Small heat shock protein IbpB of Serratia proteamaculans (strain 568).